We begin with the raw amino-acid sequence, 121 residues long: Large ribosomal subunit protein bL20 (121 aa).

Belongs to the bacterial ribosomal protein bL20 family.

Binds directly to 23S ribosomal RNA and is necessary for the in vitro assembly process of the 50S ribosomal subunit. It is not involved in the protein synthesizing functions of that subunit. This is Large ribosomal subunit protein bL20 from Moorella thermoacetica (strain ATCC 39073 / JCM 9320).